A 515-amino-acid chain; its full sequence is 4-hydroxybenzoate brominase (decarboxylating) (515 aa).

Positions 13, 32, 40, 41, 51, 102, and 364 each coordinate FAD.

The protein belongs to the FMO family. Requires FAD as cofactor.

The enzyme catalyses 2 bromide + 4-hydroxybenzoate + 2 NADPH + 2 O2 + 5 H(+) = 2,4-dibromophenol + CO2 + 2 NADP(+) + 4 H2O. It catalyses the reaction bromide + 4-hydroxybenzoate + NADPH + O2 + 2 H(+) = 3-bromo-4-hydroxybenzoate + NADP(+) + 2 H2O. It carries out the reaction 3-bromo-4-hydroxybenzoate + bromide + NADPH + O2 + 3 H(+) = 2,4-dibromophenol + CO2 + NADP(+) + 2 H2O. The catalysed reaction is 3,4-dihydroxybenzoate + 2 bromide + 2 NADPH + 2 O2 + 5 H(+) = 3,5-dibromobenzene-1,2-diol + CO2 + 2 NADP(+) + 4 H2O. The enzyme catalyses 3,4-dihydroxybenzoate + bromide + NADPH + O2 + 2 H(+) = 3-bromo-4,5-dihydroxybenzoate + NADP(+) + 2 H2O. It catalyses the reaction 3-bromo-4,5-dihydroxybenzoate + bromide + NADPH + O2 + 3 H(+) = 3,5-dibromobenzene-1,2-diol + CO2 + NADP(+) + 2 H2O. Activity is abolished in the absence of either bromide or NADPH, while a partial reduction in activity is observed upon omission of FAD. Activity does not require the addition of a flavin reductase to regenerate FADH(2) in situ. Its function is as follows. Brominase involved in the biosynthesis of polybrominated aromatic organic compounds. Catalyzes the bromination of 4-hydroxybenzoate (4-HBA) to 3-bromo-4-hydroxybenzoate, followed by bromination and decarboxylation of 3-bromo-4-hydroxybenzoate to 2,4-dibromophenol. Can also use 3,4-dihydroxybenzoate, with lower efficiency, forming 3-bromo-4,5-dihydroxybenzoate and 3,5-dibromobenzene-1,2-diol. Can utilize iodide in vivo leading to the formation of iodophenols, but cannot use chloride. In Pseudoalteromonas luteoviolacea (strain 2ta16), this protein is 4-hydroxybenzoate brominase (decarboxylating).